The chain runs to 322 residues: Fructose-1,6-bisphosphatase class 1 3 (322 aa).

Residues glutamate 84, aspartate 103, leucine 105, and aspartate 106 each contribute to the Mg(2+) site. Substrate-binding positions include 106 to 109 (DGSS), asparagine 198, and lysine 262. Mg(2+) is bound at residue glutamate 268.

It belongs to the FBPase class 1 family. As to quaternary structure, homotetramer. The cofactor is Mg(2+).

The protein resides in the cytoplasm. It catalyses the reaction beta-D-fructose 1,6-bisphosphate + H2O = beta-D-fructose 6-phosphate + phosphate. The protein operates within carbohydrate biosynthesis; gluconeogenesis. The protein is Fructose-1,6-bisphosphatase class 1 3 of Pseudoalteromonas translucida (strain TAC 125).